The sequence spans 382 residues: Ribonuclease D (382 aa).

The 3'-5' exonuclease domain maps to Ile-4 to Leu-169. Residues Lys-208–Glu-289 form the HRDC domain.

Belongs to the RNase D family. A divalent metal cation is required as a cofactor.

The protein localises to the cytoplasm. It carries out the reaction Exonucleolytic cleavage that removes extra residues from the 3'-terminus of tRNA to produce 5'-mononucleotides.. Its function is as follows. Exonuclease involved in the 3' processing of various precursor tRNAs. Initiates hydrolysis at the 3'-terminus of an RNA molecule and releases 5'-mononucleotides. The sequence is that of Ribonuclease D from Nitrobacter hamburgensis (strain DSM 10229 / NCIMB 13809 / X14).